The primary structure comprises 512 residues: rRNA N(6)-adenosine-methyltransferase ZCCHC4 (512 aa).

8 residues coordinate Zn(2+): Cys39, His41, Cys63, Cys72, Cys124, Cys127, His139, and His142. Residues 39-81 form a GRF-type zinc finger; sequence CPHGPTLLFVKVNQGKEETRKFYACSACRDRKDCNFFQWEDEK. S-adenosyl-L-methionine-binding positions include 171–174, Arg201, Asp223, 241–242, and Asp274; these read QYLF and NM. The segment at 335–355 is regulatory loop; it reads QVDYDNHALYKHGKTGRKQSP. The Zn(2+) site is built by Cys378, Cys381, His391, Cys392, Cys395, Cys398, His408, Cys409, Cys412, Cys415, His422, Cys423, Cys426, Cys429, His434, and Cys436. Residues 393–445 enclose the DHHC domain; it reads VHCNSCTSKDGRKWSHCFLCKKCVKPSWIHCNTCNRCALPDHSCLGPKDGCFI. Residues 441–458 form a CCHC-type zinc finger; the sequence is DGCFICGALDHKRSNCPN.

It belongs to the ZCCHC4 family. Interacts with components of the ASC-1 complex TRIP4, ASCC1, ASCC2 and ASCC3. Interact with AHCYL1 and AHCYL2. Interact with YTHDC2.

It is found in the cytoplasm. The protein resides in the nucleus. Its subcellular location is the nucleolus. It carries out the reaction adenosine(4220) in 28S rRNA + S-adenosyl-L-methionine = N(6)-methyladenosine(4220) in 28S rRNA + S-adenosyl-L-homocysteine + H(+). In terms of biological role, rRNA N6-methyltransferase that specifically methylates the adenine in position 4220 of 28S rRNA. N6-methylation of adenine(4220) in 28S rRNA is required for translation. This is rRNA N(6)-adenosine-methyltransferase ZCCHC4 from Mus musculus (Mouse).